The following is a 2145-amino-acid chain: U5 small nuclear ribonucleoprotein 200 kDa helicase (2145 aa).

Disordered stretches follow at residues 54–82 (GDRAIKGKAPVQDQKKKRKKKDDEKAQQF) and 202–243 (DSDE…GDGH). The span at 220-231 (SEEESEEEEGVD) shows a compositional bias: acidic residues. The region spanning 484–667 (DSALRSKEHL…FLRVKPEHLH (184 aa)) is the Helicase ATP-binding 1 domain. Residue 497 to 504 (APTGAGKT) coordinates ATP. Positions 609–612 (DEIH) match the DEAH box motif. The 218-residue stretch at 677 to 894 (PLEQQYIGVT…QMVSRLTDML (218 aa)) folds into the Helicase C-terminal domain. Residues 975-1278 (TELGRIASHF…IGAETVLPIS (304 aa)) form the SEC63 1 domain. Residues 1331–1506 (RTVFESNENV…WLGCSASATF (176 aa)) form the Helicase ATP-binding 2 domain. Residue 1344 to 1351 (APNGSGKT) coordinates ATP. A DEAH box motif is present at residues 1448–1451 (DDLH). Residues 1812 to 2124 (LNLGMIASYY…YLGADQEFDV (313 aa)) form the SEC63 2 domain.

Belongs to the helicase family. SKI2 subfamily.

The protein localises to the nucleus. The catalysed reaction is ATP + H2O = ADP + phosphate + H(+). In terms of biological role, catalyzes the ATP-dependent unwinding of U4/U6 RNA duplices, an essential step in the assembly of a catalytically active spliceosome. Plays a role in pre-mRNA splicing. The polypeptide is U5 small nuclear ribonucleoprotein 200 kDa helicase (Caenorhabditis elegans).